A 298-amino-acid chain; its full sequence is MEQDLARIEQFLDALWLERNLAENTLSAYRRDLSMVVAWLHHRGKTLATAQADDLQTLLAERVEGGYKATSSARLLSAMRRFFQHLYREKYREDDPSAQLASPKLPQRLPKDLSEAQVERLLQAPLIDQPLELRDKAMLEVLYATGLRVSELVGLTMSDISLRQGVVRVIGKGNKERLVPLGEEAVYWLETYLEHGRPWLLNGVSIDVLFPSQRAQQMTRQTFWHRIKHYAVLAGIDSEKLSPHVLRHAFATHLLNHGADLRVVQMLLGHSDLSTTQIYTHVATERLRQLHQQHHPRA.

In terms of domain architecture, Core-binding (CB) spans 2-87 (EQDLARIEQF…AMRRFFQHLY (86 aa)). Residues 108–292 (RLPKDLSEAQ…ATERLRQLHQ (185 aa)) form the Tyr recombinase domain. Active-site residues include R148, K172, H244, R247, and H270. The O-(3'-phospho-DNA)-tyrosine intermediate role is filled by Y279.

Belongs to the 'phage' integrase family. XerD subfamily. Forms a cyclic heterotetrameric complex composed of two molecules of XerC and two molecules of XerD, in which XerC interacts with XerD via its C-terminal region, XerD interacts with XerC via its C-terminal region and so on.

Its subcellular location is the cytoplasm. FtsK may regulate the catalytic switch between XerC and XerD in the heterotetrameric complex during the two steps of the recombination process. Site-specific tyrosine recombinase, which acts by catalyzing the cutting and rejoining of the recombining DNA molecules. Binds cooperatively to specific DNA consensus sequences that are separated from XerC binding sites by a short central region, forming the heterotetrameric XerC-XerD complex that recombines DNA substrates. The complex is essential to convert dimers of the bacterial chromosome into monomers to permit their segregation at cell division. It also contributes to the segregational stability of plasmids. In the complex XerD specifically exchanges the bottom DNA strands. In Salmonella typhi, this protein is Tyrosine recombinase XerD (xerD).